The following is a 160-amino-acid chain: Cyclic pyranopterin monophosphate synthase (160 aa).

Substrate contacts are provided by residues 75–77 (LCH) and 113–114 (ME). Asp128 is an active-site residue.

The protein belongs to the MoaC family. In terms of assembly, homohexamer; trimer of dimers.

The enzyme catalyses (8S)-3',8-cyclo-7,8-dihydroguanosine 5'-triphosphate = cyclic pyranopterin phosphate + diphosphate. Its pathway is cofactor biosynthesis; molybdopterin biosynthesis. Its function is as follows. Catalyzes the conversion of (8S)-3',8-cyclo-7,8-dihydroguanosine 5'-triphosphate to cyclic pyranopterin monophosphate (cPMP). The polypeptide is Cyclic pyranopterin monophosphate synthase (Methylobacterium nodulans (strain LMG 21967 / CNCM I-2342 / ORS 2060)).